Consider the following 607-residue polypeptide: Autophagy-related protein 16-1 (607 aa).

The interval 13–43 (WKRHIAEELRRRDRLQRQAFEEIILQYTKLL) is interaction with ATG5. A coiled-coil region spans residues 79-230 (DSQLQEMAQL…QKELAEAAKE (152 aa)). Position 139 is a phosphoserine (Ser-139). The WIPI2-binding stretch occupies residues 207–230 (AENEKDSRRRQARLQKELAEAAKE). The interval 230-242 (EPLPVEQDDDIEV) is RB1CC1-binding. Phosphoserine is present on residues Ser-269 and Ser-287. The Caspase cleavage signature appears at 296–299 (DIMD). WD repeat units follow at residues 320–359 (AHDGEVNAVQFSPGSRLLATGGMDRRVKLWEAFGDKCEFK), 364–403 (GSNAGITSIEFDSAGAYLLAASNDFASRIWTVDDYRLRHT), 406–445 (GHSGKVLSAKFLLDNARIVSGSHDRTLKLWDLRSKVCIKT), 447–484 (FAGSSCNDIVCTEQCVMSGHFDKKIRFWDIRSESVVRE), 486–525 (ELLGKITALDLNPERTELLSCSRDDLLKVIDLRTNAVKQT), 532–573 (KCGS…KVLS), and 575–607 (QHSSSINAVAWAPSGLHVVSVDKGSRAVLWAQP).

It belongs to the WD repeat ATG16 family. Homodimer. Homooligomer. Heterooligomer with ATG16L2. Interacts with WIPI1. Interacts with WIPI2. Interacts with RB1CC1; the interaction is required for ULK1 complex-dependent autophagy. Interacts with ATG5. Part of the minor complex composed of 4 sets of ATG12-ATG5 and ATG16L1 (400 kDa); this complex interacts with ATG3 leading to disruption of ATG7 interaction and promotion of ATG8-like proteins lipidation. Part of the major complex composed of 8 sets of ATG12-ATG5 and ATG16L1 (800 kDa). Interacts with RAB33B (GTP- and GDP-bound forms); the complex consists of a tetramer where two RAB33B molecules bind independently one molecule of the ATG16L1 homodimer; the interaction promotes ATG12-ATG5-ATG16L1 complex recruitment to phagophores. Interacts (via WD repeats) with TMEM59; the interaction mediates unconventional autophagic activity of TMEM59. Interacts with TLR2. Interacts (via WD repeats) with MEFV. Interacts (via N-terminal) with CLTC. Interacts with NOD1. Interacts with NOD2. Interacts with TUFM. Interacts with TRIM16. Interacts (via WD repeats) with SPATA33. Interacts with Irgm1. In terms of processing, proteolytic cleavage by activated CASP3 leads to degradation and may regulate autophagy upon cellular stress and apoptotic stimuli. Post-translationally, phosphorylation at Ser-139 promotes association with the ATG12-ATG5 conjugate to form the ATG12-ATG5-ATG16L1 complex. In terms of tissue distribution, widely expressed. Expressed in the testis and sperm midpiece (at protein level). As to expression, expressed in liver. Highly expressed in liver. In terms of tissue distribution, expressed in brain.

Its subcellular location is the cytoplasm. The protein resides in the preautophagosomal structure membrane. It localises to the endosome membrane. It is found in the lysosome membrane. Functionally, plays an essential role in both canonical and non-canonical autophagy: interacts with ATG12-ATG5 to mediate the lipidation to ATG8 family proteins (MAP1LC3A, MAP1LC3B, MAP1LC3C, GABARAPL1, GABARAPL2 and GABARAP). Acts as a molecular hub, coordinating autophagy pathways via distinct domains that support either canonical or non-canonical signaling. During canonical autophagy, interacts with ATG12-ATG5 to mediate the conjugation of phosphatidylethanolamine (PE) to ATG8 proteins, to produce a membrane-bound activated form of ATG8. Thereby, controls the elongation of the nascent autophagosomal membrane. As part of the ATG8 conjugation system with ATG5 and ATG12, required for recruitment of LRRK2 to stressed lysosomes and induction of LRRK2 kinase activity in response to lysosomal stress. Also involved in non-canonical autophagy, a parallel pathway involving conjugation of ATG8 proteins to single membranes at endolysosomal compartments, probably by catalyzing conjugation of phosphatidylserine (PS) to ATG8. Non-canonical autophagy plays a key role in epithelial cells to limit lethal infection by influenza A (IAV) virus. Regulates mitochondrial antiviral signaling (MAVS)-dependent type I interferon (IFN-I) production. Negatively regulates NOD1- and NOD2-driven inflammatory cytokine response. Instead, promotes an autophagy-dependent antibacterial pathway together with NOD1 or NOD2. Plays a role in regulating morphology and function of Paneth cell. The protein is Autophagy-related protein 16-1 of Mus musculus (Mouse).